A 393-amino-acid chain; its full sequence is Staphopain B (393 aa).

A signal peptide spans 1–36 (MNSSYKSRVFNIISIIMVSMLILSLGAFANNNKAKA). Residues 37–219 (DSHSKQLEIN…KVEENEAIQE (183 aa)) constitute a propeptide that is removed on maturation. Active-site residues include cysteine 243, histidine 340, and asparagine 360.

Belongs to the peptidase C47 family. As to quaternary structure, in the cytoplasm, prematurely activated/folded SspB forms a stable non-covalent complex with SspC. In terms of processing, proteolytically cleaved by staphylococcal serine protease (SspA).

The protein localises to the secreted. With respect to regulation, prematurely activated/folded staphopain B is inhibited by staphostatin B (SspC), which is probably required to protect staphylococcal cytoplasmic proteins from degradation by SspB. Cysteine protease that plays an important role in the inhibition of host innate immune response. Degrades host elastin, fibrogen, fibronectin and kininogen. Blocks phagocytosis of opsonised S.aureus by neutrophils and monocytes by inducing their death in a proteolytic activity-dependent manner. Decreases surface expression of the 'don't eat me' signal CD31 on neutrophils. Cleaves host galectin-3/LGALS3, thereby inhibiting the neutrophil-activating ability of the lectin. This is Staphopain B (sspB) from Staphylococcus aureus (strain MSSA476).